Here is a 413-residue protein sequence, read N- to C-terminus: Serine--tRNA ligase (413 aa).

Residue 221–223 participates in L-serine binding; the sequence is TAE. 252-254 is a binding site for ATP; that stretch reads RRE. Glutamate 275 is an L-serine binding site. An ATP-binding site is contributed by 339–342; that stretch reads EVSS. Serine 375 contributes to the L-serine binding site.

This sequence belongs to the class-II aminoacyl-tRNA synthetase family. Type-1 seryl-tRNA synthetase subfamily. Homodimer. The tRNA molecule binds across the dimer.

The protein resides in the cytoplasm. The enzyme catalyses tRNA(Ser) + L-serine + ATP = L-seryl-tRNA(Ser) + AMP + diphosphate + H(+). It carries out the reaction tRNA(Sec) + L-serine + ATP = L-seryl-tRNA(Sec) + AMP + diphosphate + H(+). It functions in the pathway aminoacyl-tRNA biosynthesis; selenocysteinyl-tRNA(Sec) biosynthesis; L-seryl-tRNA(Sec) from L-serine and tRNA(Sec): step 1/1. In terms of biological role, catalyzes the attachment of serine to tRNA(Ser). Is also able to aminoacylate tRNA(Sec) with serine, to form the misacylated tRNA L-seryl-tRNA(Sec), which will be further converted into selenocysteinyl-tRNA(Sec). The polypeptide is Serine--tRNA ligase (Dehalococcoides mccartyi (strain ATCC BAA-2100 / JCM 16839 / KCTC 5957 / BAV1)).